The primary structure comprises 511 residues: Cytochrome P450 71A6 (511 aa).

2 consecutive transmembrane segments (helical) span residues 1–15 and 61–77; these read ILIA…LFFL and VMQL…ASSP. Residues Asn-90, Asn-96, and Asn-167 are each glycosylated (N-linked (GlcNAc...) asparagine). Cys-450 provides a ligand contact to heme.

Belongs to the cytochrome P450 family. Heme is required as a cofactor.

Its subcellular location is the membrane. The polypeptide is Cytochrome P450 71A6 (CYP71A6) (Nepeta racemosa (Catmint)).